Reading from the N-terminus, the 289-residue chain is Elongation factor Ts (289 aa).

Residues 82–85 (TDFL) are involved in Mg(2+) ion dislocation from EF-Tu.

It belongs to the EF-Ts family.

The protein resides in the cytoplasm. Its function is as follows. Associates with the EF-Tu.GDP complex and induces the exchange of GDP to GTP. It remains bound to the aminoacyl-tRNA.EF-Tu.GTP complex up to the GTP hydrolysis stage on the ribosome. In Pseudomonas aeruginosa (strain LESB58), this protein is Elongation factor Ts.